The sequence spans 266 residues: Small ribosomal subunit protein uS2 (266 aa).

Residues 238 to 266 are disordered; that stretch reads EFASAPDAGKKGRQAQPKKGKRASDAAAE. Positions 248–258 are enriched in basic residues; that stretch reads KGRQAQPKKGK.

It belongs to the universal ribosomal protein uS2 family.

The polypeptide is Small ribosomal subunit protein uS2 (Xylella fastidiosa (strain M12)).